The primary structure comprises 229 residues: Choline-phosphate cytidylyltransferase (229 aa).

Residues Leu-6, Ala-8, Gly-9, Tyr-80, Asn-82, Ser-85, and Ala-101 each contribute to the CDP-choline site. Mg(2+) is bound at residue Asp-102. Tyr-185 contributes to the CDP-choline binding site. Glu-211 and Asp-213 together coordinate Mg(2+).

Belongs to the LicC/PntC cytidylyltransferase family. Monomer. Forms dimers in LicC-CDP-Cho-Mg(2+) crystals, but the monomer is probably the biologically functional unit. Requires Mg(2+) as cofactor.

The catalysed reaction is phosphocholine + CTP + H(+) = CDP-choline + diphosphate. It functions in the pathway cell wall biogenesis; teichoic acid biosynthesis. Its pathway is cell wall biogenesis; lipoteichoic acid biosynthesis. Its activity is regulated as follows. Mg(2+) in slight excess of CTP gives maximal activity. Strongly inhibited by Ca(2+) and several other metal ions, such as Cd(2+), Co(2+), Cu(2+), Mn(2+), Ni(2+), Zn(2+) and Fe(2+). Also inhibited by Mg(2+) at high concentrations. CDP-Cho is a competitive inhibitor with respect to CTP, whereas diphosphate is a mixed-type inhibitor with respect to CTP. Cytidylyltransferase involved in the biosynthesis of the phosphocholine containing cell wall constituents, teichoic acid and lipoteichoic acid, which are essential for cell separation and pathogenesis. Catalyzes the activation of phosphocholine (P-Cho) to CDP-choline (CDP-Cho). Can also use phosphoethanolamine and 2-aminoethylphosphonate, with much lower efficiency. Shows lower activity with dCTP, weak activity with ATP and no activity with GTP, TTP, UTP, dATP, dGTP and dTTP. In Streptococcus pneumoniae (strain ATCC BAA-255 / R6), this protein is Choline-phosphate cytidylyltransferase.